Reading from the N-terminus, the 459-residue chain is Ribulose bisphosphate carboxylase large chain (459 aa).

Lys4 is modified (N6,N6,N6-trimethyllysine). The substrate site is built by Asn113 and Thr163. The Proton acceptor role is filled by Lys165. Lys167 contributes to the substrate binding site. 3 residues coordinate Mg(2+): Lys191, Asp193, and Glu194. Lys191 is modified (N6-carboxylysine). His284 serves as the catalytic Proton acceptor. Positions 285, 317, and 369 each coordinate substrate.

Belongs to the RuBisCO large chain family. Type I subfamily. Heterohexadecamer of 8 large chains and 8 small chains; disulfide-linked. The disulfide link is formed within the large subunit homodimers. Mg(2+) is required as a cofactor. Post-translationally, the disulfide bond which can form in the large chain dimeric partners within the hexadecamer appears to be associated with oxidative stress and protein turnover.

It localises to the plastid. Its subcellular location is the chloroplast. The catalysed reaction is 2 (2R)-3-phosphoglycerate + 2 H(+) = D-ribulose 1,5-bisphosphate + CO2 + H2O. It carries out the reaction D-ribulose 1,5-bisphosphate + O2 = 2-phosphoglycolate + (2R)-3-phosphoglycerate + 2 H(+). RuBisCO catalyzes two reactions: the carboxylation of D-ribulose 1,5-bisphosphate, the primary event in carbon dioxide fixation, as well as the oxidative fragmentation of the pentose substrate in the photorespiration process. Both reactions occur simultaneously and in competition at the same active site. The sequence is that of Ribulose bisphosphate carboxylase large chain from Cephalotus follicularis (Albany pitcher plant).